The sequence spans 389 residues: Pyruvylated Gal-beta-1,3-epitope synthesis protein 2 (389 aa).

Residues 1–16 (MTKLWVNFFSQKLLRL) are Cytoplasmic-facing. Residues 17 to 37 (LIPSIIVVFAFAALFAIYSPI) form a helical membrane-spanning segment. The Lumenal portion of the chain corresponds to 38–389 (QLGGINFYKR…WSNSFDLITA (352 aa)).

It localises to the endoplasmic reticulum membrane. The protein localises to the golgi apparatus membrane. Involved in cell wall biogenesis. Has a role in the addition of Gal-beta1,3 moeities to galactomannans and their subsequent pyruvylation. Has a role in meiosis. This Schizosaccharomyces pombe (strain 972 / ATCC 24843) (Fission yeast) protein is Pyruvylated Gal-beta-1,3-epitope synthesis protein 2 (pvg2).